The following is a 478-amino-acid chain: Protein nucleotidyltransferase YdiU (478 aa).

The ATP site is built by glycine 84, glycine 86, arginine 87, lysine 107, aspartate 119, glycine 120, arginine 170, and arginine 177. Catalysis depends on aspartate 246, which acts as the Proton acceptor. Residues asparagine 247 and aspartate 256 each coordinate Mg(2+). Aspartate 256 is an ATP binding site.

It belongs to the SELO family. The cofactor is Mg(2+). Mn(2+) serves as cofactor.

The enzyme catalyses L-seryl-[protein] + ATP = 3-O-(5'-adenylyl)-L-seryl-[protein] + diphosphate. It carries out the reaction L-threonyl-[protein] + ATP = 3-O-(5'-adenylyl)-L-threonyl-[protein] + diphosphate. It catalyses the reaction L-tyrosyl-[protein] + ATP = O-(5'-adenylyl)-L-tyrosyl-[protein] + diphosphate. The catalysed reaction is L-histidyl-[protein] + UTP = N(tele)-(5'-uridylyl)-L-histidyl-[protein] + diphosphate. The enzyme catalyses L-seryl-[protein] + UTP = O-(5'-uridylyl)-L-seryl-[protein] + diphosphate. It carries out the reaction L-tyrosyl-[protein] + UTP = O-(5'-uridylyl)-L-tyrosyl-[protein] + diphosphate. Nucleotidyltransferase involved in the post-translational modification of proteins. It can catalyze the addition of adenosine monophosphate (AMP) or uridine monophosphate (UMP) to a protein, resulting in modifications known as AMPylation and UMPylation. This is Protein nucleotidyltransferase YdiU from Escherichia coli (strain SE11).